Consider the following 156-residue polypeptide: Small ribosomal subunit protein uS7 (156 aa).

This sequence belongs to the universal ribosomal protein uS7 family. Part of the 30S ribosomal subunit. Contacts proteins S9 and S11.

One of the primary rRNA binding proteins, it binds directly to 16S rRNA where it nucleates assembly of the head domain of the 30S subunit. Is located at the subunit interface close to the decoding center, probably blocks exit of the E-site tRNA. In Aliivibrio salmonicida (strain LFI1238) (Vibrio salmonicida (strain LFI1238)), this protein is Small ribosomal subunit protein uS7.